The sequence spans 506 residues: Pentatricopeptide repeat-containing protein At5g18475 (506 aa).

The interval 28 to 48 (SEKKKKPSPPPESSISPVETN) is disordered. 12 PPR repeats span residues 88 to 122 (NNATYSVLLDNLVRHKKFLAVDAILHQMKYETCRF), 123 to 158 (QESLFLNLMRHFSRSDLHDKVMEMFNLIQVIARVKP), 159 to 194 (SLNAISTCLNLLIDSGEVNLSRKLLLYAKHNLGLQP), 195 to 229 (NTCIFNILVKHHCKNGDINFAFLVVEEMKRSGISY), 231 to 266 (NSITYSTLMDCLFAHSRSKEAVELFEDMISKEGISP), 267 to 301 (DPVTFNVMINGFCRAGEVERAKKILDFMKKNGCNP), 302 to 336 (NVYNYSALMNGFCKVGKIQEAKQTFDEVKKTGLKL), 337 to 371 (DTVGYTTLMNCFCRNGETDEAMKLLGEMKASRCRA), 372 to 406 (DTLTYNVILRGLSSEGRSEEALQMLDQWGSEGVHL), 407 to 441 (NKGSYRIILNALCCNGELEKAVKFLSVMSERGIWP), 442 to 476 (HHATWNELVVRLCESGYTEIGVRVLIGFLRIGLIP), and 477 to 506 (GPKSWGAVVESICKERKLVHVFELLDSLVS).

This sequence belongs to the PPR family. P subfamily.

The chain is Pentatricopeptide repeat-containing protein At5g18475 from Arabidopsis thaliana (Mouse-ear cress).